Consider the following 210-residue polypeptide: Outer-membrane lipoprotein LolB (210 aa).

The N-terminal stretch at 1-26 (MSKLKIDTKRRFSLLIALVLIISLSS) is a signal peptide. C27 carries N-palmitoyl cysteine lipidation. The S-diacylglycerol cysteine moiety is linked to residue C27.

This sequence belongs to the LolB family. Monomer.

It localises to the cell outer membrane. Its function is as follows. Plays a critical role in the incorporation of lipoproteins in the outer membrane after they are released by the LolA protein. The protein is Outer-membrane lipoprotein LolB of Francisella tularensis subsp. novicida (strain U112).